The chain runs to 77 residues: Pollen allergen Amb p 5b (77 aa).

A signal peptide spans 1–22 (MNNEKNVSFEFIGSTNEVDEIK). 3 cysteine pairs are disulfide-bonded: C26/C61, C33/C48, and C40/C54.

It localises to the secreted. This Ambrosia psilostachya (Western ragweed) protein is Pollen allergen Amb p 5b.